Here is a 116-residue protein sequence, read N- to C-terminus: Putative serine proteinase inhibitor 2 homolog first part (116 aa).

It belongs to the serpin family. Poxviruses subfamily.

The chain is Putative serine proteinase inhibitor 2 homolog first part from Vaccinia virus (strain Copenhagen) (VACV).